We begin with the raw amino-acid sequence, 1958 residues long: Rho GTPase-activating protein 21 (1958 aa).

Residues 1–42 form a disordered region; it reads MMATRRTGLSEGDGDKLKACEVSKNKDGKEQSETVSLSEDET. The segment covering 13–32 has biased composition (basic and acidic residues); the sequence is DGDKLKACEVSKNKDGKEQS. Residues Ser-36 and Ser-57 each carry the phosphoserine modification. A PDZ domain is found at 50–159; that stretch reads TVTLKRTSQG…TLELSVMPKD (110 aa). 3 stretches are compositionally biased toward polar residues: residues 286-295, 306-325, and 418-436; these read SNRNNHTGPS, SEQT…LSIP, and ASQS…TTLQ. 2 disordered regions span residues 286–325 and 418–458; these read SNRN…LSIP and ASQS…QRSV. Low complexity predominate over residues 448–458; sequence PQSVQIRQRSV. Phosphoserine is present on Ser-459. Omega-N-methylarginine occurs at positions 554 and 575. 3 positions are modified to phosphoserine: Ser-612, Ser-616, and Ser-625. Polar residues predominate over residues 659 to 687; it reads SLLNQQTWVRTDSAPDQQVETGKSPSLSG. The segment at 659–751 is disordered; sequence SLLNQQTWVR…PSGRQTPQPL (93 aa). Ser-717 is modified (phosphoserine). The span at 729 to 742 shows a compositional bias: basic and acidic residues; that stretch reads LDNKEAVILREKPP. Thr-747 bears the Phosphothreonine mark. Phosphoserine is present on residues Ser-857, Ser-862, and Ser-881. The disordered stretch occupies residues 859–885; that stretch reads DHESVGPPSLDAQPNSKTERSKSYDEG. Basic and acidic residues predominate over residues 875–885; the sequence is KTERSKSYDEG. Tyr-882 carries the post-translational modification Phosphotyrosine. 5 positions are modified to phosphoserine: Ser-924, Ser-926, Ser-954, Ser-1099, and Ser-1115. An interaction with ARF1 and ARF6 region spans residues 930 to 1097; the sequence is SDAAKEGWLH…AKSEPKTQSP (168 aa). The PH domain occupies 931-1040; it reads DAAKEGWLHF…WIKTIQESSN (110 aa). The disordered stretch occupies residues 1086–1133; that stretch reads LGAKSEPKTQSPHSPKEESERKLLSKDDTSPPKDKGTWRKGIPSIMRK. Residues 1099–1122 show a composition bias toward basic and acidic residues; that stretch reads SPKEESERKLLSKDDTSPPKDKGT. One can recognise a Rho-GAP domain in the interval 1147 to 1339; that stretch reads VRLDDCPPAH…TLIQHHDWFF (193 aa). 4 disordered regions span residues 1348 to 1401, 1418 to 1575, 1598 to 1642, and 1655 to 1686; these read LTTV…GSGK, SRKR…KHSE, SLDS…SEFP, and RGKL…SSLD. A compositionally biased stretch (polar residues) spans 1349–1362; it reads TTVQEESTVDSQPV. Residues 1383–1401 are compositionally biased toward low complexity; it reads SDSATSDSTKSKGSWGSGK. 3 positions are modified to phosphoserine: Ser-1418, Ser-1432, and Ser-1433. 2 stretches are compositionally biased toward basic and acidic residues: residues 1441 to 1466 and 1477 to 1493; these read FFKK…ETLG and NSTR…KISL. A Glycyl lysine isopeptide (Lys-Gly) (interchain with G-Cter in SUMO) cross-link involves residue Lys-1444. Ser-1504 bears the Phosphoserine mark. At Thr-1516 the chain carries Phosphothreonine. Ser-1527 carries the phosphoserine modification. A compositionally biased stretch (low complexity) spans 1544 to 1559; it reads SDSGTLLSTSSQASLA. Positions 1592–1861 are interaction with CTNNA1; sequence SATYLTSLDS…WLARERLRTS (270 aa). The segment covering 1603–1612 has biased composition (polar residues); that stretch reads RLSPEVQSVA. A compositionally biased stretch (basic and acidic residues) spans 1624 to 1634; sequence SELISEGRPVE. Phosphoserine is present on Ser-1669. A compositionally biased stretch (polar residues) spans 1671 to 1686; that stretch reads GSELSCTEGSLTSSLD. Position 1682 is a phosphothreonine (Thr-1682). Position 1742 is a phosphoserine (Ser-1742). Residues 1860 to 1958 form a disordered region; sequence TSTSDLSRGE…GSKAEFHPCL (99 aa). Positions 1874 to 1909 are enriched in polar residues; it reads QTENPSTREIATTDTPLSLHCNTGSSSSTLASTNRP. Ser-1917 carries the phosphoserine modification. The span at 1918 to 1931 shows a compositional bias: polar residues; the sequence is PDQINGESFQNVSK.

Interacts with GTP-bound ARF1 and ARF6. Interacts with CTNNA1. Sumoylated with SUMO2 and SUMO3 in proliferating lymphocytes. Widely expressed with higher expression in brain, heart, skeletal muscle and placenta.

The protein localises to the golgi apparatus membrane. It localises to the cell junction. The protein resides in the cytoplasmic vesicle membrane. It is found in the cytoplasm. Its subcellular location is the cytoskeleton. Its function is as follows. Functions as a GTPase-activating protein (GAP) for RHOA and CDC42. Downstream partner of ARF1 which may control Golgi apparatus structure and function. Also required for CTNNA1 recruitment to adherens junctions. This is Rho GTPase-activating protein 21 (ARHGAP21) from Homo sapiens (Human).